The chain runs to 1040 residues: Desmoglein-4 (1040 aa).

Residues 1–23 form the signal peptide; it reads MDWLLFRNICLLILFMVVLGVNS. The propeptide occupies 24-49; sequence EFIVEVKELDIENGTTTWQTVRRQKR. Cadherin domains lie at 50–157, 158–269, 270–385, and 389–497; these read EWIK…PPVF, TQNV…FPIL, EKTS…GPTF, and SMTF…CPVI. Residues 50–633 are Extracellular-facing; sequence EWIKFAAACR…RQSNVGLGPA (584 aa). N110 carries an N-linked (GlcNAc...) asparagine glycan. N545 carries N-linked (GlcNAc...) asparagine glycosylation. Residues 634 to 654 form a helical membrane-spanning segment; that stretch reads GIGMIILGLLLLFLSPLLLLM. Topologically, residues 655 to 1040 are cytoplasmic; sequence CCCKRRQPEG…RYSNIHYSRQ (386 aa). Desmoglein repeat repeat units follow at residues 883–909 and 910–940; these read TLSE…IVTE and TYTA…ETVM. The disordered stretch occupies residues 1015–1040; the sequence is QTTRSTSPMTSQHRVTRYSNIHYSRQ.

In terms of assembly, interacts with JUP.

Its subcellular location is the cell membrane. It localises to the cell junction. The protein resides in the desmosome. Its function is as follows. A component of desmosome cell-cell junctions which are required for positive regulation of cellular adhesion. Coordinates the transition from proliferation to differentiation in hair follicle keratinocytes. Plays a role in moderating lymphocyte migration to inflamed skin and maintaining homeostasis of the epidermal inflammatory response. The chain is Desmoglein-4 (Dsg4) from Rattus norvegicus (Rat).